We begin with the raw amino-acid sequence, 253 residues long: Ciliary microtubule associated protein 1B (253 aa).

One copy of the STPGR repeat lies at 182-207; it reads PGPCAYQVVSPGVYKSRAPQFTILAR.

The protein belongs to the CIMAP family.

The protein localises to the cell projection. Its subcellular location is the cilium. It localises to the flagellum. The protein is Ciliary microtubule associated protein 1B of Homo sapiens (Human).